Consider the following 183-residue polypeptide: Ribulose bisphosphate carboxylase small subunit, chloroplastic (183 aa).

The transit peptide at 1 to 59 (MASSMISSGTVATVSADRPAPAQARMVAPFNGLKSSSAFPVTRKSNDITSIASNGGRVQ) directs the protein to the chloroplast.

The protein belongs to the RuBisCO small chain family. In terms of assembly, heterohexadecamer of 8 large and 8 small subunits.

The protein resides in the plastid. It is found in the chloroplast. RuBisCO catalyzes two reactions: the carboxylation of D-ribulose 1,5-bisphosphate, the primary event in carbon dioxide fixation, as well as the oxidative fragmentation of the pentose substrate. Both reactions occur simultaneously and in competition at the same active site. Although the small subunit is not catalytic it is essential for maximal activity. The chain is Ribulose bisphosphate carboxylase small subunit, chloroplastic from Pyrus pyrifolia (Chinese pear).